Reading from the N-terminus, the 131-residue chain is uncharacterized protein (131 aa).

Helical transmembrane passes span 52–72 (LIMI…FYLV) and 97–117 (SDII…YDVG).

Its subcellular location is the membrane. This is an uncharacterized protein from Acanthamoeba polyphaga mimivirus (APMV).